We begin with the raw amino-acid sequence, 670 residues long: Transketolase (670 aa).

His31 contacts substrate. Residues His71 and 120–122 (GPL) each bind thiamine diphosphate. Asp161 lines the Mg(2+) pocket. 2 residues coordinate thiamine diphosphate: Gly162 and Asn191. Mg(2+) is bound by residues Asn191 and Ile193. Substrate-binding residues include His268, Arg362, and Ser389. A thiamine diphosphate-binding site is contributed by His268. Glu416 (proton donor) is an active-site residue. Phe443 is a thiamine diphosphate binding site. His467, Asp475, and Arg528 together coordinate substrate.

As to quaternary structure, homodimer. Requires Mg(2+) as cofactor. Ca(2+) is required as a cofactor. The cofactor is Mn(2+). It depends on Co(2+) as a cofactor. Thiamine diphosphate serves as cofactor.

It catalyses the reaction D-sedoheptulose 7-phosphate + D-glyceraldehyde 3-phosphate = aldehydo-D-ribose 5-phosphate + D-xylulose 5-phosphate. Functionally, catalyzes the transfer of a two-carbon ketol group from a ketose donor to an aldose acceptor, via a covalent intermediate with the cofactor thiamine pyrophosphate. The polypeptide is Transketolase (tkt) (Nostoc sp. (strain PCC 7120 / SAG 25.82 / UTEX 2576)).